The following is a 248-amino-acid chain: Putative imidazole glycerol phosphate synthase subunit hisF2 (248 aa).

Aspartate 129 is an active-site residue.

This sequence belongs to the HisA/HisF family. Heterodimer of HisH and HisF.

It localises to the cytoplasm. The enzyme catalyses 5-[(5-phospho-1-deoxy-D-ribulos-1-ylimino)methylamino]-1-(5-phospho-beta-D-ribosyl)imidazole-4-carboxamide + L-glutamine = D-erythro-1-(imidazol-4-yl)glycerol 3-phosphate + 5-amino-1-(5-phospho-beta-D-ribosyl)imidazole-4-carboxamide + L-glutamate + H(+). Its pathway is amino-acid biosynthesis; L-histidine biosynthesis; L-histidine from 5-phospho-alpha-D-ribose 1-diphosphate: step 5/9. In terms of biological role, IGPS catalyzes the conversion of PRFAR and glutamine to IGP, AICAR and glutamate. The HisF subunit catalyzes the cyclization activity that produces IGP and AICAR from PRFAR using the ammonia provided by the HisH subunit. This is Putative imidazole glycerol phosphate synthase subunit hisF2 (hisF2) from Campylobacter jejuni subsp. jejuni serotype O:2 (strain ATCC 700819 / NCTC 11168).